The sequence spans 189 residues: Glycerol-3-phosphate acyltransferase 1 (189 aa).

5 consecutive transmembrane segments (helical) span residues 12-32 (MQFL…AYIV), 61-81 (GYFV…VSIA), 88-108 (FTFV…PMLF), 124-144 (IAFD…FYLI), and 164-184 (ILYS…VLIL).

The protein belongs to the PlsY family. In terms of assembly, probably interacts with PlsX.

It is found in the cell membrane. The enzyme catalyses an acyl phosphate + sn-glycerol 3-phosphate = a 1-acyl-sn-glycero-3-phosphate + phosphate. It functions in the pathway lipid metabolism; phospholipid metabolism. Its function is as follows. Catalyzes the transfer of an acyl group from acyl-phosphate (acyl-PO(4)) to glycerol-3-phosphate (G3P) to form lysophosphatidic acid (LPA). This enzyme utilizes acyl-phosphate as fatty acyl donor, but not acyl-CoA or acyl-ACP. This chain is Glycerol-3-phosphate acyltransferase 1, found in Bacillus anthracis.